We begin with the raw amino-acid sequence, 932 residues long: Lipoxygenase 2.2, chloroplastic (932 aa).

Residues 79 to 219 form the PLAT domain; the sequence is MKATVSVHMK…CSPDKRTFFP (141 aa). Residues 223-932 enclose the Lipoxygenase domain; it reads SYIPSQTPKG…EMGIPNSISI (710 aa). Residues 270–284 are compositionally biased toward basic and acidic residues; that stretch reads PESKRPVLGGKEHPY. A disordered region spans residues 270 to 311; the sequence is PESKRPVLGGKEHPYPRRCRTGRPRSKTDPSSEEESHKKGEM. Residues 285 to 294 are compositionally biased toward basic residues; that stretch reads PRRCRTGRPR. Basic and acidic residues predominate over residues 295-311; it reads SKTDPSSEEESHKKGEM. Residues H588, H593, H778, N782, and I932 each coordinate Fe cation.

Belongs to the lipoxygenase family. It depends on Fe cation as a cofactor.

Its subcellular location is the plastid. The protein localises to the chloroplast. It carries out the reaction (9Z,12Z)-octadecadienoate + O2 = (13S)-hydroperoxy-(9Z,11E)-octadecadienoate. The catalysed reaction is (9Z,12Z,15Z)-octadecatrienoate + O2 = (13S)-hydroperoxy-(9Z,11E,15Z)-octadecatrienoate. It participates in lipid metabolism; oxylipin biosynthesis. Its function is as follows. Plant lipoxygenase may be involved in a number of diverse aspects of plant physiology including growth and development, pest resistance, and senescence or responses to wounding. This enzyme exhibits linoleate 13-lipoxygenase activity. This Hordeum vulgare (Barley) protein is Lipoxygenase 2.2, chloroplastic (LOX2.2).